The sequence spans 384 residues: Organic solute transporter alpha-like protein 1 (384 aa).

The Extracellular portion of the chain corresponds to 1 to 38 (MEIVKTIIPHNRSYIEPPIPSATEWLANMSVMHVSCLT). Asparagine 11 and asparagine 28 each carry an N-linked (GlcNAc...) asparagine glycan. The chain crosses the membrane as a helical span at residues 39 to 59 (IACVFVAITFLSSFFHLFFVL). Residues 60-70 (KYVSNERIRND) are Cytoplasmic-facing. A helical membrane pass occupies residues 71 to 91 (MYALIFMFPITTFASLVGMFI). The Extracellular segment spans residues 92-93 (PR). A helical transmembrane segment spans residues 94–114 (AAIFLYAVSLVYFMFTLFIMV). At 115-165 (TLLFNIFGGRQEMSAYLLQRNIRVNFTVPPLCFFKFLPTVESTDQNLRRIE) the chain is on the cytoplasmic side. A helical membrane pass occupies residues 166 to 186 (WLVFQTPIIRTLLELVSVVVS). Residues 187–202 (MEQEGRRESVWFVFSQ) are Extracellular-facing. The chain crosses the membrane as a helical span at residues 203–223 (LMALLSMCIAFYGCYVMVPLG). Topologically, residues 224 to 240 (REKHAPYRFDFLFRTCD) are cytoplasmic. The chain crosses the membrane as a helical span at residues 241–261 (IAQCIYTIQKFVFEFAAAVGL). The Extracellular portion of the chain corresponds to 262–273 (ITSDRYLPAAAK). The helical transmembrane segment at 274–294 (ALWWASFMCTWEMMLLSALCS) threads the bilayer. Over 295–384 (YCLRPAKCKF…FDSLSQIQGQ (90 aa)) the chain is Cytoplasmic.

Belongs to the OST-alpha family.

The protein localises to the cell membrane. Functionally, probable transporter. This chain is Organic solute transporter alpha-like protein 1 (osta-1), found in Caenorhabditis elegans.